A 307-amino-acid polypeptide reads, in one-letter code: Membrane protein insertase YidC 2 (307 aa).

An N-terminal signal peptide occupies residues 1–23; it reads MKLTLNRILFSGLALSILFTLTG. The N-palmitoyl cysteine moiety is linked to residue Cys24. Cys24 carries S-diacylglycerol cysteine lipidation. The next 5 membrane-spanning stretches (helical) occupy residues 58–78, 135–155, 179–199, 209–225, and 231–251; these read LGYG…ILPL, LGGI…AMYF, VLTA…MMAV, TMMY…SFSL, and LYWL…TYLL. Positions 263-307 are disordered; sequence YAKTPPKAYQSTSSRKDVTPSQNMEQANLPKKIKSNRNAGKQRKR. Positions 271-288 are enriched in polar residues; the sequence is YQSTSSRKDVTPSQNMEQ. Basic residues predominate over residues 293 to 307; the sequence is KKIKSNRNAGKQRKR.

This sequence belongs to the OXA1/ALB3/YidC family. Type 2 subfamily.

It localises to the cell membrane. Required for the insertion and/or proper folding and/or complex formation of integral membrane proteins into the membrane. Involved in integration of membrane proteins that insert both dependently and independently of the Sec translocase complex, as well as at least some lipoproteins. This is Membrane protein insertase YidC 2 from Streptococcus pyogenes serotype M18 (strain MGAS8232).